We begin with the raw amino-acid sequence, 657 residues long: Protein translocase subunit SecA 2 (657 aa).

ATP contacts are provided by residues Gln93, 111–115 (GEGKT), and Asp531.

Belongs to the SecA family. In terms of assembly, monomer and homodimer. Part of the essential Sec protein translocation apparatus which comprises SecA, SecYEG and auxiliary proteins SecDF. Other proteins may also be involved.

Its subcellular location is the cell inner membrane. It is found in the cytoplasm. The catalysed reaction is ATP + H2O + cellular proteinSide 1 = ADP + phosphate + cellular proteinSide 2.. In terms of biological role, part of the Sec protein translocase complex. Interacts with the SecYEG preprotein conducting channel. Has a central role in coupling the hydrolysis of ATP to the transfer of proteins into and across the cell membrane, serving as an ATP-driven molecular motor driving the stepwise translocation of polypeptide chains across the membrane. In Rhodopirellula baltica (strain DSM 10527 / NCIMB 13988 / SH1), this protein is Protein translocase subunit SecA 2.